The primary structure comprises 309 residues: MEKILIFGHQNPDTDTICSAIAYADLKNKLGFNAEPVRLGQVNGETQYALDYFKQESPRLVETAANEVNGVILVDHNERQQSIKDIEDVQVLEVIDHHRIANFETAEPLYYRAEPVGCTATILNKMYKENNVKIEKEIAGLMLSAIISDSLLFKSPTCTEQDIAAAKELAEIAGVDAEEYGLNMLKAGADLSKKTVEELISLDAKEFTLGSKKVEIAQVNTVDIEDVKKRQPELEAALSKVIAEKNLDLFLLVITDILENDSLALAIGDQASKVEKAFNVTLENNTALLKGVVSRKKQVVPVLTDAIAE.

6 residues coordinate Mn(2+): H9, D13, D15, D75, H97, and D149.

Belongs to the PPase class C family. Mn(2+) is required as a cofactor.

The protein resides in the cytoplasm. It catalyses the reaction diphosphate + H2O = 2 phosphate + H(+). The sequence is that of Probable manganese-dependent inorganic pyrophosphatase from Bacillus velezensis (strain DSM 23117 / BGSC 10A6 / LMG 26770 / FZB42) (Bacillus amyloliquefaciens subsp. plantarum).